A 525-amino-acid polypeptide reads, in one-letter code: GMP synthase [glutamine-hydrolyzing] (525 aa).

Residues 9–207 (RILILDFGSQ…ILDICGCEAL (199 aa)) enclose the Glutamine amidotransferase type-1 domain. The Nucleophile role is filled by C86. Active-site residues include H181 and E183. In terms of domain architecture, GMPS ATP-PPase spans 208–400 (WTPSKIAEDA…LGLPYDMVYR (193 aa)). 235 to 241 (SGGVDSS) lines the ATP pocket.

As to quaternary structure, homodimer.

It carries out the reaction XMP + L-glutamine + ATP + H2O = GMP + L-glutamate + AMP + diphosphate + 2 H(+). The protein operates within purine metabolism; GMP biosynthesis; GMP from XMP (L-Gln route): step 1/1. In terms of biological role, catalyzes the synthesis of GMP from XMP. This chain is GMP synthase [glutamine-hydrolyzing], found in Pseudomonas syringae pv. syringae (strain B728a).